A 549-amino-acid chain; its full sequence is CTP synthase (549 aa).

The amidoligase domain stretch occupies residues 1 to 270 (MTKFVFVTGG…DRLICEELRL (270 aa)). S13 is a binding site for CTP. Position 13 (S13) interacts with UTP. ATP contacts are provided by residues 14 to 19 (SLGKGI) and D71. Residues D71 and E144 each contribute to the Mg(2+) site. CTP is bound by residues 151–153 (DIE), 191–196 (KTKPTQ), and K227. UTP is bound by residues 191–196 (KTKPTQ) and K227. Positions 295–547 (TIGMVGKYVD…VEAALAAQRQ (253 aa)) constitute a Glutamine amidotransferase type-1 domain. G356 contacts L-glutamine. The active-site Nucleophile; for glutamine hydrolysis is C383. Residues 384 to 387 (LGMQ), E407, and R473 contribute to the L-glutamine site. Catalysis depends on residues H520 and E522.

It belongs to the CTP synthase family. As to quaternary structure, homotetramer.

It carries out the reaction UTP + L-glutamine + ATP + H2O = CTP + L-glutamate + ADP + phosphate + 2 H(+). The catalysed reaction is L-glutamine + H2O = L-glutamate + NH4(+). The enzyme catalyses UTP + NH4(+) + ATP = CTP + ADP + phosphate + 2 H(+). It functions in the pathway pyrimidine metabolism; CTP biosynthesis via de novo pathway; CTP from UDP: step 2/2. Allosterically activated by GTP, when glutamine is the substrate; GTP has no effect on the reaction when ammonia is the substrate. The allosteric effector GTP functions by stabilizing the protein conformation that binds the tetrahedral intermediate(s) formed during glutamine hydrolysis. Inhibited by the product CTP, via allosteric rather than competitive inhibition. Catalyzes the ATP-dependent amination of UTP to CTP with either L-glutamine or ammonia as the source of nitrogen. Regulates intracellular CTP levels through interactions with the four ribonucleotide triphosphates. This Cupriavidus metallidurans (strain ATCC 43123 / DSM 2839 / NBRC 102507 / CH34) (Ralstonia metallidurans) protein is CTP synthase.